A 379-amino-acid chain; its full sequence is Cobalt-precorrin-5B C(1)-methyltransferase (379 aa).

It belongs to the CbiD family.

It carries out the reaction Co-precorrin-5B + S-adenosyl-L-methionine = Co-precorrin-6A + S-adenosyl-L-homocysteine. It participates in cofactor biosynthesis; adenosylcobalamin biosynthesis; cob(II)yrinate a,c-diamide from sirohydrochlorin (anaerobic route): step 6/10. Functionally, catalyzes the methylation of C-1 in cobalt-precorrin-5B to form cobalt-precorrin-6A. This Salmonella choleraesuis (strain SC-B67) protein is Cobalt-precorrin-5B C(1)-methyltransferase.